We begin with the raw amino-acid sequence, 418 residues long: Adenosylhomocysteinase (418 aa).

3 residues coordinate substrate: Thr53, Asp125, and Glu150. An NAD(+)-binding site is contributed by 151 to 153 (TTT). Substrate-binding residues include Lys180 and Asp184. NAD(+) contacts are provided by residues Asn185, 214–219 (GYGWCG), Glu237, Asn272, 293–295 (SGH), and Asn340.

It belongs to the adenosylhomocysteinase family. It depends on NAD(+) as a cofactor.

It localises to the cytoplasm. The catalysed reaction is S-adenosyl-L-homocysteine + H2O = L-homocysteine + adenosine. It functions in the pathway amino-acid biosynthesis; L-homocysteine biosynthesis; L-homocysteine from S-adenosyl-L-homocysteine: step 1/1. Its function is as follows. May play a key role in the regulation of the intracellular concentration of adenosylhomocysteine. This chain is Adenosylhomocysteinase, found in Aquifex aeolicus (strain VF5).